Reading from the N-terminus, the 292-residue chain is Bis(5'-nucleosyl)-tetraphosphatase, symmetrical (292 aa).

Residues 271-292 (LSIEHPRHTHTPRRQAKKHSKK) form a disordered region. Residues 277 to 292 (RHTHTPRRQAKKHSKK) are compositionally biased toward basic residues.

Belongs to the Ap4A hydrolase family.

The catalysed reaction is P(1),P(4)-bis(5'-adenosyl) tetraphosphate + H2O = 2 ADP + 2 H(+). Hydrolyzes diadenosine 5',5'''-P1,P4-tetraphosphate to yield ADP. The polypeptide is Bis(5'-nucleosyl)-tetraphosphatase, symmetrical (apaH) (Xylella fastidiosa (strain 9a5c)).